Here is a 259-residue protein sequence, read N- to C-terminus: Ribosomal RNA small subunit methyltransferase A (259 aa).

The S-adenosyl-L-methionine site is built by N12, L14, G39, E60, D84, and N102.

The protein belongs to the class I-like SAM-binding methyltransferase superfamily. rRNA adenine N(6)-methyltransferase family. RsmA subfamily.

The protein localises to the cytoplasm. It carries out the reaction adenosine(1518)/adenosine(1519) in 16S rRNA + 4 S-adenosyl-L-methionine = N(6)-dimethyladenosine(1518)/N(6)-dimethyladenosine(1519) in 16S rRNA + 4 S-adenosyl-L-homocysteine + 4 H(+). In terms of biological role, specifically dimethylates two adjacent adenosines (A1518 and A1519) in the loop of a conserved hairpin near the 3'-end of 16S rRNA in the 30S particle. May play a critical role in biogenesis of 30S subunits. This is Ribosomal RNA small subunit methyltransferase A from Nitrosospira multiformis (strain ATCC 25196 / NCIMB 11849 / C 71).